The primary structure comprises 66 residues: Putative antitoxin APE_0279a.1 (66 aa).

It belongs to the UPF0165 family.

Its function is as follows. Possibly the antitoxin component of a type II toxin-antitoxin (TA) system. In Aeropyrum pernix (strain ATCC 700893 / DSM 11879 / JCM 9820 / NBRC 100138 / K1), this protein is Putative antitoxin APE_0279a.1.